Here is a 485-residue protein sequence, read N- to C-terminus: Glutamate--tRNA ligase (485 aa).

The short motif at 11–21 (PSPTGLLHIGN) is the 'HIGH' region element. A 'KMSKS' region motif is present at residues 255–259 (KLSKR). Position 258 (Lys258) interacts with ATP.

Belongs to the class-I aminoacyl-tRNA synthetase family. Glutamate--tRNA ligase type 1 subfamily. As to quaternary structure, monomer.

The protein resides in the cytoplasm. The enzyme catalyses tRNA(Glu) + L-glutamate + ATP = L-glutamyl-tRNA(Glu) + AMP + diphosphate. In terms of biological role, catalyzes the attachment of glutamate to tRNA(Glu) in a two-step reaction: glutamate is first activated by ATP to form Glu-AMP and then transferred to the acceptor end of tRNA(Glu). The protein is Glutamate--tRNA ligase of Streptococcus gordonii (strain Challis / ATCC 35105 / BCRC 15272 / CH1 / DL1 / V288).